Reading from the N-terminus, the 200-residue chain is Imidazoleglycerol-phosphate dehydratase (200 aa).

Belongs to the imidazoleglycerol-phosphate dehydratase family.

The protein localises to the cytoplasm. The enzyme catalyses D-erythro-1-(imidazol-4-yl)glycerol 3-phosphate = 3-(imidazol-4-yl)-2-oxopropyl phosphate + H2O. It functions in the pathway amino-acid biosynthesis; L-histidine biosynthesis; L-histidine from 5-phospho-alpha-D-ribose 1-diphosphate: step 6/9. This is Imidazoleglycerol-phosphate dehydratase from Chlorobium phaeobacteroides (strain BS1).